Here is a 253-residue protein sequence, read N- to C-terminus: Tryptophan synthase alpha chain (253 aa).

Residues E45 and D56 each act as proton acceptor in the active site.

Belongs to the TrpA family. As to quaternary structure, tetramer of two alpha and two beta chains.

It carries out the reaction (1S,2R)-1-C-(indol-3-yl)glycerol 3-phosphate + L-serine = D-glyceraldehyde 3-phosphate + L-tryptophan + H2O. The protein operates within amino-acid biosynthesis; L-tryptophan biosynthesis; L-tryptophan from chorismate: step 5/5. In terms of biological role, the alpha subunit is responsible for the aldol cleavage of indoleglycerol phosphate to indole and glyceraldehyde 3-phosphate. The polypeptide is Tryptophan synthase alpha chain (Flavobacterium johnsoniae (strain ATCC 17061 / DSM 2064 / JCM 8514 / BCRC 14874 / CCUG 350202 / NBRC 14942 / NCIMB 11054 / UW101) (Cytophaga johnsonae)).